A 583-amino-acid polypeptide reads, in one-letter code: Aspartate--tRNA ligase (583 aa).

Glutamate 174 provides a ligand contact to L-aspartate. An aspartate region spans residues 198-201 (QITK). Residue arginine 220 coordinates L-aspartate. ATP-binding positions include 220-222 (RDE) and glutamine 229. Histidine 443 lines the L-aspartate pocket. Glutamate 477 is a binding site for ATP. Arginine 484 contributes to the L-aspartate binding site. 529 to 532 (GLDR) is an ATP binding site.

This sequence belongs to the class-II aminoacyl-tRNA synthetase family. Type 1 subfamily. In terms of assembly, homodimer.

Its subcellular location is the cytoplasm. It carries out the reaction tRNA(Asp) + L-aspartate + ATP = L-aspartyl-tRNA(Asp) + AMP + diphosphate. In terms of biological role, catalyzes the attachment of L-aspartate to tRNA(Asp) in a two-step reaction: L-aspartate is first activated by ATP to form Asp-AMP and then transferred to the acceptor end of tRNA(Asp). The chain is Aspartate--tRNA ligase from Streptococcus agalactiae serotype III (strain NEM316).